Consider the following 205-residue polypeptide: High frequency lysogenization protein HflD homolog (205 aa).

The protein belongs to the HflD family.

It localises to the cytoplasm. The protein resides in the cell inner membrane. This chain is High frequency lysogenization protein HflD homolog, found in Photobacterium profundum (strain SS9).